A 421-amino-acid polypeptide reads, in one-letter code: UPF0415 protein C7orf25 (421 aa).

The protein belongs to the UPF0415 family.

This chain is UPF0415 protein C7orf25 (C7orf25), found in Homo sapiens (Human).